Consider the following 502-residue polypeptide: UPF0371 protein CLK_3516 (502 aa).

Belongs to the UPF0371 family.

This is UPF0371 protein CLK_3516 from Clostridium botulinum (strain Loch Maree / Type A3).